The following is a 298-amino-acid chain: MSAQNSLFSGSIVALVTPMNHYGEVDFSCLEKLVEHHIEAGSNALVSVGTTGESATLSIEENVKVIEKTVEFAKGRIPIIAGAGANATSEAITMTKLLRDSGVAGCLSVVPYYNKPTQEGMYQHFKAIAECTDLPQILYNVPSRTGSDMKPETVARLAEIENIVGIKEATRDVSRIVKIKQLAGKNFIVLSGDDATGLEAIKLGAEGVISVTNNIAAKDMADMCRYALAGDFDKAEEINARLMRLHHDLFIESNPIPVKWAAYRLGLIKSPHLRLPLTTLSEEIQPKVGDALKIAGLL.

Residue threonine 51 participates in pyruvate binding. Tyrosine 139 acts as the Proton donor/acceptor in catalysis. Catalysis depends on lysine 167, which acts as the Schiff-base intermediate with substrate. Pyruvate is bound at residue isoleucine 209.

This sequence belongs to the DapA family. In terms of assembly, homotetramer; dimer of dimers.

It localises to the cytoplasm. It carries out the reaction L-aspartate 4-semialdehyde + pyruvate = (2S,4S)-4-hydroxy-2,3,4,5-tetrahydrodipicolinate + H2O + H(+). It functions in the pathway amino-acid biosynthesis; L-lysine biosynthesis via DAP pathway; (S)-tetrahydrodipicolinate from L-aspartate: step 3/4. Functionally, catalyzes the condensation of (S)-aspartate-beta-semialdehyde [(S)-ASA] and pyruvate to 4-hydroxy-tetrahydrodipicolinate (HTPA). In Haemophilus influenzae (strain ATCC 51907 / DSM 11121 / KW20 / Rd), this protein is 4-hydroxy-tetrahydrodipicolinate synthase.